The sequence spans 273 residues: Ribosomal RNA small subunit methyltransferase A (273 aa).

Positions 25, 27, 52, 73, 99, and 118 each coordinate S-adenosyl-L-methionine.

The protein belongs to the class I-like SAM-binding methyltransferase superfamily. rRNA adenine N(6)-methyltransferase family. RsmA subfamily.

The protein localises to the cytoplasm. It carries out the reaction adenosine(1518)/adenosine(1519) in 16S rRNA + 4 S-adenosyl-L-methionine = N(6)-dimethyladenosine(1518)/N(6)-dimethyladenosine(1519) in 16S rRNA + 4 S-adenosyl-L-homocysteine + 4 H(+). Specifically dimethylates two adjacent adenosines (A1518 and A1519) in the loop of a conserved hairpin near the 3'-end of 16S rRNA in the 30S particle. May play a critical role in biogenesis of 30S subunits. In Novosphingobium aromaticivorans (strain ATCC 700278 / DSM 12444 / CCUG 56034 / CIP 105152 / NBRC 16084 / F199), this protein is Ribosomal RNA small subunit methyltransferase A.